We begin with the raw amino-acid sequence, 805 residues long: U-box domain-containing protein 70 (805 aa).

TPR repeat units follow at residues 15-48 (ARREKEAGNAAYRKLYLETAVRHYTRGALLDPRD), 49-82 (ISFLTNRAAAYLLMSKYKECVRDCDEAVEKGREL), 90-127 (ARALARKASALLKLAACAADYDPAIRALQQSLAEHYSE), 129-153 (TLAKLGEAEEARKEIEERERLDQEA), 154-187 (ADHHRDRGNDFFKQKRYQEAAMHYTEAMKKNPKD), 189-221 (RVFSNRAQCHIYLGALPEGLEDADKCIALDPTF), and 222-255 (LKGYLRKAKVQLLMGNYEIALATYVEGLKCDPNN). Residues 136–160 (AEEARKEIEERERLDQEAADHHRDR) form a disordered region. Residues 341–417 (RKETEESLSR…VREVEELRQK (77 aa)) adopt a coiled-coil conformation. The 267-residue stretch at 445-711 (FSNSLKIGEG…GEVWAIVEAI (267 aa)) folds into the Protein kinase domain. Residues 451 to 459 (IGEGGFGCV) and Lys-472 each bind ATP. Asp-567 acts as the Proton acceptor in catalysis. Positions 730 to 804 (SPPSYFICPI…QEWLQQHSMS (75 aa)) constitute a U-box domain.

Belongs to the protein kinase superfamily. Ser/Thr protein kinase family. Interacts with MODD.

The enzyme catalyses L-seryl-[protein] + ATP = O-phospho-L-seryl-[protein] + ADP + H(+). The catalysed reaction is L-threonyl-[protein] + ATP = O-phospho-L-threonyl-[protein] + ADP + H(+). It catalyses the reaction S-ubiquitinyl-[E2 ubiquitin-conjugating enzyme]-L-cysteine + [acceptor protein]-L-lysine = [E2 ubiquitin-conjugating enzyme]-L-cysteine + N(6)-ubiquitinyl-[acceptor protein]-L-lysine.. The protein operates within protein modification; protein ubiquitination. In terms of biological role, functions as an E3 ubiquitin ligase. Is recruited by MODD to promote ubiquitination of BZIP46, a positive regulator of abscisic acid (ABA) signaling and drought stress tolerance. The sequence is that of U-box domain-containing protein 70 from Oryza sativa subsp. japonica (Rice).